A 525-amino-acid polypeptide reads, in one-letter code: Phosphoenolpyruvate carboxykinase (ATP) 1 (525 aa).

3 residues coordinate substrate: arginine 55, tyrosine 190, and lysine 196. Residues lysine 196, histidine 215, and 231–239 (GLSGTGKTT) contribute to the ATP site. Residues lysine 196 and histidine 215 each contribute to the Mn(2+) site. Aspartate 252 is a binding site for Mn(2+). ATP contacts are provided by glutamate 280, arginine 317, and threonine 442. Position 317 (arginine 317) interacts with substrate.

This sequence belongs to the phosphoenolpyruvate carboxykinase (ATP) family. Requires Mn(2+) as cofactor.

It localises to the cytoplasm. It catalyses the reaction oxaloacetate + ATP = phosphoenolpyruvate + ADP + CO2. The protein operates within carbohydrate biosynthesis; gluconeogenesis. Functionally, involved in the gluconeogenesis. Catalyzes the conversion of oxaloacetate (OAA) to phosphoenolpyruvate (PEP) through direct phosphoryl transfer between the nucleoside triphosphate and OAA. This Moorella thermoacetica (strain ATCC 39073 / JCM 9320) protein is Phosphoenolpyruvate carboxykinase (ATP) 1.